A 352-amino-acid polypeptide reads, in one-letter code: Plant intracellular Ras-group-related LRR protein 1 (352 aa).

The interval 1–25 is disordered; sequence MREMGEKRRRGHLNPAGFAGGLHDH. 10 LRR repeats span residues 29–52, 53–75, 77–99, 100–122, 124–146, 147–169, 171–192, 195–217, 218–241, and 243–263; these read KNEE…TMSL, GQVT…IIAR, LNVV…IGCL, SKLK…IEEC, ALEE…GFEL, HSLR…TSHM, ALRA…LENL, LEAL…VGLL, ASLR…GCLT, and LARF…VVEQ. Positions 264 to 271 match the GVYW; degenerate motif; sequence GLDAMRAY.

Belongs to the SHOC2 family. Widely expressed but at a lower level in seedlings and stems.

Functionally, leucine-rich repeat protein that likely mediates protein interactions, possibly in the context of signal transduction. The chain is Plant intracellular Ras-group-related LRR protein 1 (IRL1) from Oryza sativa subsp. japonica (Rice).